Here is a 138-residue protein sequence, read N- to C-terminus: Putative pre-16S rRNA nuclease (138 aa).

It belongs to the YqgF nuclease family.

It is found in the cytoplasm. Functionally, could be a nuclease involved in processing of the 5'-end of pre-16S rRNA. The sequence is that of Putative pre-16S rRNA nuclease from Salmonella schwarzengrund (strain CVM19633).